Consider the following 1679-residue polypeptide: Protein MLP2 (1679 aa).

Coiled coils occupy residues 32–176, 233–466, 516–1064, and 1099–1491; these read AKFE…KYDT, YNKF…RQVK, FSNV…EREL, and KLVS…ENAG. Short sequence motifs (bipartite nuclear localization signal) lie at residues 417-433, 639-655, and 1433-1449; these read KRST…KRKQ, RKEL…KKTT, and KKEW…RRIK. Disordered regions lie at residues 1495–1521 and 1632–1679; these read FLDN…SERP and DLTN…ASNE. Polar residues-rich tracts occupy residues 1511–1520 and 1646–1661; these read NSPSKGNSER and IGST…TSSD. A Phosphoserine modification is found at serine 1512. Residues 1662–1671 are compositionally biased toward basic and acidic residues; sequence PDTKKVKESP. Serine 1670 carries the post-translational modification Phosphoserine.

Component of the nuclear complex (NPC). NPC constitutes the exclusive means of nucleocytoplasmic transport. NPCs allow the passive diffusion of ions and small molecules and the active, nuclear transport receptor-mediated bidirectional transport of macromolecules such as proteins, RNAs, ribonucleoparticles (RNPs), and ribosomal subunits across the nuclear envelope. Due to its 8-fold rotational symmetry, all subunits are present with 8 copies or multiples thereof. Interacts with NUP60 and NIC96, which tether it to the nuclear pore complex. Component of the spindle pole body core in which it interacts directly with SPC110, SPC42 and SPC29. Also interacts with YKU70 (HDF1) and MLP1.

The protein localises to the nucleus. The protein resides in the cytoplasm. Its subcellular location is the cytoskeleton. It localises to the microtubule organizing center. It is found in the spindle pole body. The protein localises to the nuclear pore complex. Its function is as follows. Together with the closely related MLP1, involved in the structural and functional organization of perinuclear chromatin. MLP1/MLP2 associate with the nuclear pore complex and form filamentous structures along the nuclear periphery. Has a role in the localization of Esc1 to nucleolar regions. Together with MLP1, mediates tethering of the some telomeres to the nuclear periphery, probably mediated by YKU70/YKU80 (HDF1/HDF2) heterodimer and show perinuclear location dependent silencing. MLP1 and MLP2 are involved in telomere length regulation but not silencing or telomere anchoring. Plays a role in the incorporation of components into the spindle pole body. Involved in double-strand break repair, probably also mediated by the YKU70/YKU80 (HDF1/HDF2) heterodimer. The protein is Protein MLP2 (MLP2) of Saccharomyces cerevisiae (strain ATCC 204508 / S288c) (Baker's yeast).